The following is a 699-amino-acid chain: Elongation factor G 1 (699 aa).

One can recognise a tr-type G domain in the interval 8–290 (EHYRNIGICA…AVIEFLPSPS (283 aa)). GTP-binding positions include 17–24 (AHVDAGKT), 88–92 (DTPGH), and 142–145 (NKMD).

Belongs to the TRAFAC class translation factor GTPase superfamily. Classic translation factor GTPase family. EF-G/EF-2 subfamily.

The protein localises to the cytoplasm. Its function is as follows. Catalyzes the GTP-dependent ribosomal translocation step during translation elongation. During this step, the ribosome changes from the pre-translocational (PRE) to the post-translocational (POST) state as the newly formed A-site-bound peptidyl-tRNA and P-site-bound deacylated tRNA move to the P and E sites, respectively. Catalyzes the coordinated movement of the two tRNA molecules, the mRNA and conformational changes in the ribosome. The protein is Elongation factor G 1 of Vibrio parahaemolyticus serotype O3:K6 (strain RIMD 2210633).